A 78-amino-acid polypeptide reads, in one-letter code: uncharacterized protein (78 aa).

An N-terminal signal peptide occupies residues 1–22 (MFKKSVLFATLLSGVMAFSTNA).

It belongs to the BhsA/McbA family.

The protein localises to the periplasm. Functionally, probably involved in reactive chlorine species (RCS) stress resistance. This is an uncharacterized protein from Escherichia coli (strain K12).